The sequence spans 326 residues: Intracellular serine protease (326 aa).

Residues 23–303 form the Peptidase S8 domain; sequence PRGVEMIQAP…NGLLYLTAVE (281 aa). Residues D49, H86, and S244 each act as charge relay system in the active site.

Belongs to the peptidase S8 family.

Functionally, involved in the generation of beta- and alpha-amylases from the large amylase precursor. This Paenibacillus polymyxa (Bacillus polymyxa) protein is Intracellular serine protease (isp).